The following is a 169-amino-acid chain: Small ribosomal subunit protein uS5 (169 aa).

The S5 DRBM domain occupies 15-79 (LKDQVVAINR…ESAKKNLVKV (65 aa)).

Belongs to the universal ribosomal protein uS5 family. As to quaternary structure, part of the 30S ribosomal subunit. Contacts proteins S4 and S8.

With S4 and S12 plays an important role in translational accuracy. In terms of biological role, located at the back of the 30S subunit body where it stabilizes the conformation of the head with respect to the body. In Koribacter versatilis (strain Ellin345), this protein is Small ribosomal subunit protein uS5.